Reading from the N-terminus, the 188-residue chain is Peptidyl-tRNA hydrolase (188 aa).

Tyr-15 lines the tRNA pocket. The active-site Proton acceptor is the His-20. TRNA contacts are provided by Phe-63, Asn-65, and Asn-111.

Belongs to the PTH family. Monomer.

It is found in the cytoplasm. The catalysed reaction is an N-acyl-L-alpha-aminoacyl-tRNA + H2O = an N-acyl-L-amino acid + a tRNA + H(+). In terms of biological role, hydrolyzes ribosome-free peptidyl-tRNAs (with 1 or more amino acids incorporated), which drop off the ribosome during protein synthesis, or as a result of ribosome stalling. Functionally, catalyzes the release of premature peptidyl moieties from peptidyl-tRNA molecules trapped in stalled 50S ribosomal subunits, and thus maintains levels of free tRNAs and 50S ribosomes. The chain is Peptidyl-tRNA hydrolase from Hydrogenobaculum sp. (strain Y04AAS1).